The primary structure comprises 338 residues: uncharacterized protein (338 aa).

The first 29 residues, 1–29, serve as a signal peptide directing secretion; the sequence is MIKQLYKNITICSLTISTALTVFPATSYA.

It belongs to the aerolysin family.

This is an uncharacterized protein from Staphylococcus aureus (strain bovine RF122 / ET3-1).